We begin with the raw amino-acid sequence, 271 residues long: ATP-dependent Clp protease proteolytic subunit 6, chloroplastic (271 aa).

Residues Met1–Asn30 form a disordered region. The transit peptide at Met1–Ala77 directs the protein to the chloroplast. Positions Ser13–Asn30 are enriched in polar residues. Residue Ser175 is the Nucleophile of the active site. His200 is an active-site residue.

It belongs to the peptidase S14 family. As to quaternary structure, component of the chloroplastic Clp protease core complex which consist of at least 16 proteins: CLPP4 (3 copies), CLPP5 (3 copies), CLPR4 (2 copies), ClpP1 (1 copy), CLPP6 (1 copy), CLPR2 (1 copy), CLPT1 (1 copy), CLPT2 (1 copy) and 3 copies of CLPP3 and/or CLPR1 and/or CLPR3. The core complex is organized in two heptameric rings, one containing CLPP3,4,5,6 in a 1:2:3:1 ratio and the other CLPP1 and CLPR1,2,3,4 in a 3:1:1:1:1 ratio. Mostly expressed in leaves. Also detected in stems, and to a lower extent, in roots (at protein level).

It is found in the plastid. Its subcellular location is the chloroplast stroma. The catalysed reaction is Hydrolysis of proteins to small peptides in the presence of ATP and magnesium. alpha-casein is the usual test substrate. In the absence of ATP, only oligopeptides shorter than five residues are hydrolyzed (such as succinyl-Leu-Tyr-|-NHMec, and Leu-Tyr-Leu-|-Tyr-Trp, in which cleavage of the -Tyr-|-Leu- and -Tyr-|-Trp bonds also occurs).. Its function is as follows. Cleaves peptides in various proteins in a process that requires ATP hydrolysis. Has a chymotrypsin-like activity. Plays a major role in the degradation of misfolded proteins. Essential protein required for chloroplast development and integrity. This Arabidopsis thaliana (Mouse-ear cress) protein is ATP-dependent Clp protease proteolytic subunit 6, chloroplastic.